Consider the following 334-residue polypeptide: Adenosine deaminase (334 aa).

Positions 16 and 18 each coordinate Zn(2+). The substrate site is built by His18, Asp20, and Gly173. His200 serves as a coordination point for Zn(2+). Glu203 (proton donor) is an active-site residue. Asp281 is a Zn(2+) binding site.

Belongs to the metallo-dependent hydrolases superfamily. Adenosine and AMP deaminases family. Adenosine deaminase subfamily. Zn(2+) serves as cofactor.

It carries out the reaction adenosine + H2O + H(+) = inosine + NH4(+). The catalysed reaction is 2'-deoxyadenosine + H2O + H(+) = 2'-deoxyinosine + NH4(+). Its function is as follows. Catalyzes the hydrolytic deamination of adenosine and 2-deoxyadenosine. This Clostridium acetobutylicum (strain ATCC 824 / DSM 792 / JCM 1419 / IAM 19013 / LMG 5710 / NBRC 13948 / NRRL B-527 / VKM B-1787 / 2291 / W) protein is Adenosine deaminase.